A 294-amino-acid chain; its full sequence is ADP-ribosyl-[dinitrogen reductase] glycohydrolase (294 aa).

ADP-D-ribose is bound by residues 100–102 (NTC), E121, H158, and Y212. Residues D243, D245, and T246 each contribute to the Mn(2+) site.

The protein belongs to the ADP-ribosylglycohydrolase family. As to quaternary structure, monomer. Requires Mn(2+) as cofactor.

It is found in the cytoplasm. It catalyses the reaction N(omega)-alpha-(ADP-D-ribosyl)-L-arginyl-[dinitrogen reductase] + H2O = L-arginyl-[dinitrogen reductase] + ADP-D-ribose. Involved in the regulation of nitrogen fixation activity by the reversible ADP-ribosylation of one subunit of the homodimeric dinitrogenase reductase component of the nitrogenase enzyme complex. The ADP-ribosyltransferase (DraT) transfers the ADP-ribose group from NAD to dinitrogenase reductase. The ADP-ribose group is removed through the action of the ADP-ribosylglycohydrolase (DraG, this entry). The protein is ADP-ribosyl-[dinitrogen reductase] glycohydrolase of Rhodospirillum rubrum.